The sequence spans 303 residues: MKPFTFYEAIEANKRKTWIIIFVISILLFLVCYAIVSYFELGEFGILVAFLMVFFVNYYAYKNSDEIILKYSGVREPTKEEFPYLLNVVEGLSIAAGIPTPKIYVMDDPSPNAFATGKDPKSGVVVVTKGLLDLLDRLELEGVIAHEISHIKNYDVRLQTVAAVMVGLIVILGDSLKRSFYYSRRRRDKDENILGIVSLVIAILAPFLATLLKFALSRQREYMADANAAMLTRYPEGLASALEKISKNFQPVKRANTMTAPLYIVNPLKGGMSNLFSTHPPIEDRIRRLRMMGERWKLLDKEG.

2 consecutive transmembrane segments (helical) span residues 19 to 39 (IIIF…VSYF) and 41 to 61 (LGEF…YYAY). Zn(2+) is bound at residue His146. Glu147 is an active-site residue. His150 contacts Zn(2+). Helical transmembrane passes span 156 to 176 (VRLQ…GDSL) and 192 to 212 (NILG…ATLL). Glu221 is a Zn(2+) binding site.

The protein belongs to the peptidase M48B family. Zn(2+) is required as a cofactor.

The protein resides in the cell inner membrane. This is Protease HtpX homolog from Dictyoglomus thermophilum (strain ATCC 35947 / DSM 3960 / H-6-12).